Here is a 212-residue protein sequence, read N- to C-terminus: F-box protein GID2 (212 aa).

The disordered stretch occupies residues methionine 1 to proline 74. Residues aspartate 35–glutamate 59 show a composition bias toward low complexity. The 47-residue stretch at glutamine 70–alanine 116 folds into the F-box domain.

As to quaternary structure, part of some SCF(GID2) complex, which consist of a SKP1 protein, CUL1, GID2 and some RING box protein. Interacts directly with SKP2 and SKP15. Interacts directly with DELLA protein SLR1. May have a higher affinity for phosphorylated SLR1 proteins. As to expression, widely expressed. Preferentially expressed in unopened flowers, shoot apices and elongation stem. Expressed at lower level in the leaf blades, leaf sheaths, roots and rachis.

The protein localises to the nucleus. The protein operates within protein modification; protein ubiquitination. In terms of biological role, essential component of some SCF-type E3 ligase complex that positively regulates the gibberellin signaling pathway. Upon gibberellin treatment, the complex mediates the ubiquitination and subsequent degradation of DELLA protein SLR1, a repressor of the gibberellin pathway, leading to activate the pathway. The chain is F-box protein GID2 (GID2) from Oryza sativa subsp. japonica (Rice).